Consider the following 430-residue polypeptide: UPF0597 protein Clos_2050 (430 aa).

Belongs to the UPF0597 family.

The protein is UPF0597 protein Clos_2050 of Alkaliphilus oremlandii (strain OhILAs) (Clostridium oremlandii (strain OhILAs)).